We begin with the raw amino-acid sequence, 60 residues long: Probable tautomerase SP_1017 (60 aa).

Catalysis depends on Pro2, which acts as the Proton acceptor; via imino nitrogen.

It belongs to the 4-oxalocrotonate tautomerase family.

The protein is Probable tautomerase SP_1017 of Streptococcus pneumoniae serotype 4 (strain ATCC BAA-334 / TIGR4).